The following is a 466-amino-acid chain: Ribulose bisphosphate carboxylase large chain (466 aa).

Lys5 is subject to N6,N6,N6-trimethyllysine. Residues Asn114 and Thr164 each coordinate substrate. Lys166 acts as the Proton acceptor in catalysis. Residue Lys168 coordinates substrate. Positions 192, 194, and 195 each coordinate Mg(2+). Lys192 is modified (N6-carboxylysine). The active-site Proton acceptor is the His285. Residues Arg286, His318, and Ser370 each coordinate substrate.

This sequence belongs to the RuBisCO large chain family. Type I subfamily. As to quaternary structure, heterohexadecamer of 8 large chains and 8 small chains; disulfide-linked. The disulfide link is formed within the large subunit homodimers. Mg(2+) is required as a cofactor. The disulfide bond which can form in the large chain dimeric partners within the hexadecamer appears to be associated with oxidative stress and protein turnover.

Its subcellular location is the plastid. It is found in the chloroplast. It catalyses the reaction 2 (2R)-3-phosphoglycerate + 2 H(+) = D-ribulose 1,5-bisphosphate + CO2 + H2O. The catalysed reaction is D-ribulose 1,5-bisphosphate + O2 = 2-phosphoglycolate + (2R)-3-phosphoglycerate + 2 H(+). Its function is as follows. RuBisCO catalyzes two reactions: the carboxylation of D-ribulose 1,5-bisphosphate, the primary event in carbon dioxide fixation, as well as the oxidative fragmentation of the pentose substrate in the photorespiration process. Both reactions occur simultaneously and in competition at the same active site. This Tropaeolum majus (Common nasturtium) protein is Ribulose bisphosphate carboxylase large chain.